Reading from the N-terminus, the 165-residue chain is Hemolysin, heat labile (165 aa).

A disulfide bond links Cys151 and Cys161.

Belongs to the TDH hemolysin family. In terms of assembly, homodimer.

Its function is as follows. Bacterial hemolysins are exotoxins that attack blood cell membranes and cause cell rupture by mechanisms not clearly defined. The protein is Hemolysin, heat labile of Grimontia hollisae (Vibrio hollisae).